The sequence spans 273 residues: Dermonecrotic toxin LarSicTox-alphaIB1b (273 aa).

The active site involves histidine 5. Mg(2+) is bound by residues glutamate 25 and aspartate 27. Histidine 41 (nucleophile) is an active-site residue. Disulfide bonds link cysteine 45–cysteine 51 and cysteine 47–cysteine 190. Aspartate 85 is a binding site for Mg(2+). Asparagine 250 carries an N-linked (GlcNAc...) asparagine glycan.

This sequence belongs to the arthropod phospholipase D family. Class II subfamily. The cofactor is Mg(2+). In terms of tissue distribution, expressed by the venom gland.

The protein localises to the secreted. It carries out the reaction an N-(acyl)-sphingosylphosphocholine = an N-(acyl)-sphingosyl-1,3-cyclic phosphate + choline. The catalysed reaction is an N-(acyl)-sphingosylphosphoethanolamine = an N-(acyl)-sphingosyl-1,3-cyclic phosphate + ethanolamine. It catalyses the reaction a 1-acyl-sn-glycero-3-phosphocholine = a 1-acyl-sn-glycero-2,3-cyclic phosphate + choline. The enzyme catalyses a 1-acyl-sn-glycero-3-phosphoethanolamine = a 1-acyl-sn-glycero-2,3-cyclic phosphate + ethanolamine. Dermonecrotic toxins cleave the phosphodiester linkage between the phosphate and headgroup of certain phospholipids (sphingolipid and lysolipid substrates), forming an alcohol (often choline) and a cyclic phosphate. This toxin acts on sphingomyelin (SM). It may also act on ceramide phosphoethanolamine (CPE), lysophosphatidylcholine (LPC) and lysophosphatidylethanolamine (LPE), but not on lysophosphatidylserine (LPS), and lysophosphatidylglycerol (LPG). It acts by transphosphatidylation, releasing exclusively cyclic phosphate products as second products. Induces dermonecrosis, hemolysis, increased vascular permeability, edema, inflammatory response, and platelet aggregation. This Loxosceles arizonica (Arizona brown spider) protein is Dermonecrotic toxin LarSicTox-alphaIB1b.